We begin with the raw amino-acid sequence, 52 residues long: MDKALLSLTHEQQQAAVEQIQQLMKQGISSGEAIQIVANRLRESHQRTNEQK.

The protein belongs to the UPF0181 family.

The chain is UPF0181 protein HD_1137 from Haemophilus ducreyi (strain 35000HP / ATCC 700724).